We begin with the raw amino-acid sequence, 457 residues long: Argininosuccinate lyase (457 aa).

This sequence belongs to the lyase 1 family. Argininosuccinate lyase subfamily.

Its subcellular location is the cytoplasm. The enzyme catalyses 2-(N(omega)-L-arginino)succinate = fumarate + L-arginine. It participates in amino-acid biosynthesis; L-arginine biosynthesis; L-arginine from L-ornithine and carbamoyl phosphate: step 3/3. In Citrobacter koseri (strain ATCC BAA-895 / CDC 4225-83 / SGSC4696), this protein is Argininosuccinate lyase.